Here is a 540-residue protein sequence, read N- to C-terminus: NEDD8-activating enzyme E1 regulatory subunit AXR1 (540 aa).

The protein belongs to the ubiquitin-activating E1 family. ULA1 subfamily. As to quaternary structure, heterodimer of ECR1 and AXR1. The complex binds to RUB1/NEDD8 and RCE1. Expressed in shoot, root and floral meristems, in vascular tissues of cotyledons and mature leaves, and in the stele of the root. Expressed at higher levels on the lower side of an emerging root during germination and at higher levels on the underside of the apical hook.

Its subcellular location is the nucleus. Its pathway is protein modification; protein neddylation. Its function is as follows. Regulatory subunit of the dimeric ECR1-AXR1 E1 enzyme. E1 activates RUB1/NEDD8 by first adenylating its C-terminal glycine residue with ATP, thereafter linking this residue to the side chain of the catalytic cysteine, yielding a RUB1-ECR1 thioester and free AMP. E1 finally transfers RUB1 to the catalytic cysteine of RCE1. Plays an important role in auxin response. Regulates the chromosomal localization of meiotic recombination by crossovers (COs) and subsequent synapsis, probably through the activation of a CRL4 complex. Required for E3-mediated protein degradation in response to auxin, jasmonic acid and cold stress. Required for the COP1-COP10-CSN-mediated repression of photomorphogenesis in the dark. May function redundantly with AXL1 in the RUB conjugating pathway. Seems not to be functionally equivalent to AXL1 in vivo. This is NEDD8-activating enzyme E1 regulatory subunit AXR1 from Arabidopsis thaliana (Mouse-ear cress).